A 329-amino-acid chain; its full sequence is MELLEYLKRDEVLFLCHHNADPDAVGSCVALKYLASQLNPNGKFRISADSVSKLSRNILNEIGERVDIEIYPKLPETVFIVDTASINQLKVNFDELKEREVILIDHHKKTDLADICKYYIIKEDYPSTSEIIAEIFKELNIFPPKNVRIALLCGIVYDTKHLKLANSKTFELISYLIKDISFQKILYLLSQESDVSKRTAHLKACSRMEIREFDKLRIALSHVSSHEASCAKTIVSIGADVAFVVAVRKKEKEIRVSARCRKHVSKYVHLGNLMEKIGKELGGSGGGHSEAGGLNAPYDKSKSKEKVIKEVLNLCYKRFVEEYKKAKQN.

The segment at 284–303 (SGGGHSEAGGLNAPYDKSKS) is disordered.

This is an uncharacterized protein from Methanocaldococcus jannaschii (strain ATCC 43067 / DSM 2661 / JAL-1 / JCM 10045 / NBRC 100440) (Methanococcus jannaschii).